A 196-amino-acid polypeptide reads, in one-letter code: Orotate phosphoribosyltransferase (196 aa).

Residues arginine 102, lysine 103, lysine 106, histidine 108, and 129–137 contribute to the 5-phospho-alpha-D-ribose 1-diphosphate site; that span reads EDVVTTGGS. The orotate site is built by threonine 133 and arginine 161.

Belongs to the purine/pyrimidine phosphoribosyltransferase family. PyrE subfamily. As to quaternary structure, homodimer. Mg(2+) serves as cofactor.

It carries out the reaction orotidine 5'-phosphate + diphosphate = orotate + 5-phospho-alpha-D-ribose 1-diphosphate. Its pathway is pyrimidine metabolism; UMP biosynthesis via de novo pathway; UMP from orotate: step 1/2. In terms of biological role, catalyzes the transfer of a ribosyl phosphate group from 5-phosphoribose 1-diphosphate to orotate, leading to the formation of orotidine monophosphate (OMP). In Prochlorococcus marinus (strain MIT 9303), this protein is Orotate phosphoribosyltransferase.